The sequence spans 189 residues: Probable thymidylate kinase 1 (189 aa).

9-16 (GIDGSGKT) provides a ligand contact to ATP.

Belongs to the thymidylate kinase family.

The catalysed reaction is dTMP + ATP = dTDP + ADP. The protein is Probable thymidylate kinase 1 (tmk1) of Saccharolobus solfataricus (strain ATCC 35092 / DSM 1617 / JCM 11322 / P2) (Sulfolobus solfataricus).